The primary structure comprises 477 residues: Ribulose bisphosphate carboxylase large chain (477 aa).

A propeptide spanning residues 1–2 (MS) is cleaved from the precursor. The residue at position 3 (P3) is an N-acetylproline. K14 is subject to N6,N6,N6-trimethyllysine. 2 residues coordinate substrate: N123 and T173. K175 acts as the Proton acceptor in catalysis. K177 is a binding site for substrate. Mg(2+) is bound by residues K201, D203, and E204. K201 bears the N6-carboxylysine mark. H294 serves as the catalytic Proton acceptor. Positions 295, 327, and 379 each coordinate substrate.

This sequence belongs to the RuBisCO large chain family. Type I subfamily. As to quaternary structure, heterohexadecamer of 8 large chains and 8 small chains; disulfide-linked. The disulfide link is formed within the large subunit homodimers. Mg(2+) serves as cofactor. The disulfide bond which can form in the large chain dimeric partners within the hexadecamer appears to be associated with oxidative stress and protein turnover.

It is found in the plastid. The protein resides in the chloroplast. The enzyme catalyses 2 (2R)-3-phosphoglycerate + 2 H(+) = D-ribulose 1,5-bisphosphate + CO2 + H2O. It catalyses the reaction D-ribulose 1,5-bisphosphate + O2 = 2-phosphoglycolate + (2R)-3-phosphoglycerate + 2 H(+). RuBisCO catalyzes two reactions: the carboxylation of D-ribulose 1,5-bisphosphate, the primary event in carbon dioxide fixation, as well as the oxidative fragmentation of the pentose substrate in the photorespiration process. Both reactions occur simultaneously and in competition at the same active site. The polypeptide is Ribulose bisphosphate carboxylase large chain (rbcL) (Solanum tuberosum (Potato)).